Consider the following 512-residue polypeptide: MEEFQGYLKKDRSLQQHFLYPLLLQEYIYTLAHDDSLNGSIFYEPIEFIGYDNKFSLVLVKRLITRMYQQNFLIYLVNDSNQNRFGGHTNYFYSHFFYSKMVSKGFSVIVEIPFSLRLVSSSEEKEIPKSQNLGSIHSIFPFLEDKLSHLNNVSDILIPHPIHFEILVQILQCWIQDVPSLHLLRFFLHKYQNLNKTIQSNKTIYVFSKENKRLFWFLYNSYVSECEFLLVFFHKQSCYLRSTSSGAFLERSHFYGKMEHIIIVCCNNFQKTLWPVKDPLIHYVRYQGKAILASRGTHLLMKKWRYYFVNFWQYYFHFWSQPYRMHINSLLNYSFYFMGYLLRVLINPYAVKNQMLENSFLIDTVIKKFDTIIPIIPLIGSLSKAKFCTFSGHPISKPIWADFSDFDIIDRFGRICRNLSHYHNGSSKKQSLYRIKYILRLSCARTLACKHKSTARALLQRLGSGLLEEFFTEEEQVLSFIFPKTTLFTLHGSHRERIWSLDIIRINDLVNN.

This sequence belongs to the intron maturase 2 family. MatK subfamily.

It is found in the plastid. Its subcellular location is the chloroplast. Functionally, usually encoded in the trnK tRNA gene intron. Probably assists in splicing its own and other chloroplast group II introns. The polypeptide is Maturase K (Lilium canadense (Canada lily)).